Consider the following 206-residue polypeptide: Glycerol-3-phosphate acyltransferase (206 aa).

5 helical membrane-spanning segments follow: residues 3 to 23 (LGWL…SYII), 51 to 71 (VGPA…AVVV), 83 to 103 (FAAA…YYGF), 113 to 133 (IGVL…IAIG), and 162 to 182 (WFGY…LSMW).

The protein belongs to the PlsY family. In terms of assembly, probably interacts with PlsX.

It is found in the cell membrane. The enzyme catalyses an acyl phosphate + sn-glycerol 3-phosphate = a 1-acyl-sn-glycero-3-phosphate + phosphate. It participates in lipid metabolism; phospholipid metabolism. In terms of biological role, catalyzes the transfer of an acyl group from acyl-phosphate (acyl-PO(4)) to glycerol-3-phosphate (G3P) to form lysophosphatidic acid (LPA). This enzyme utilizes acyl-phosphate as fatty acyl donor, but not acyl-CoA or acyl-ACP. This chain is Glycerol-3-phosphate acyltransferase, found in Halalkalibacterium halodurans (strain ATCC BAA-125 / DSM 18197 / FERM 7344 / JCM 9153 / C-125) (Bacillus halodurans).